A 484-amino-acid chain; its full sequence is UDP-N-acetylmuramate--L-alanine ligase (484 aa).

126–132 (GTHGKTT) provides a ligand contact to ATP.

This sequence belongs to the MurCDEF family.

Its subcellular location is the cytoplasm. It carries out the reaction UDP-N-acetyl-alpha-D-muramate + L-alanine + ATP = UDP-N-acetyl-alpha-D-muramoyl-L-alanine + ADP + phosphate + H(+). It participates in cell wall biogenesis; peptidoglycan biosynthesis. Its function is as follows. Cell wall formation. The polypeptide is UDP-N-acetylmuramate--L-alanine ligase (Tolumonas auensis (strain DSM 9187 / NBRC 110442 / TA 4)).